The sequence spans 368 residues: Ferrochelatase (368 aa).

Fe cation contacts are provided by His-209 and Glu-290. Positions 347–368 (REEQEQQAHISREEARRLGADQ) are disordered.

It belongs to the ferrochelatase family.

The protein localises to the cytoplasm. The catalysed reaction is heme b + 2 H(+) = protoporphyrin IX + Fe(2+). It functions in the pathway porphyrin-containing compound metabolism; protoheme biosynthesis; protoheme from protoporphyrin-IX: step 1/1. Functionally, catalyzes the ferrous insertion into protoporphyrin IX. This chain is Ferrochelatase, found in Janthinobacterium sp. (strain Marseille) (Minibacterium massiliensis).